Here is a 281-residue protein sequence, read N- to C-terminus: MDAYQSVGIRRRLKRFFRRDGRALIFAMDHGFEHGPTDFEPVWEHVNPRIIIRKVVRAGVDGVMMLPGIVRMAGDELKPDTGLMIKLTSKTELRPKEEQLLQSQLGYVEDAIKLGADAIAATVYWGSPQEDVMMRQFAEIASYAHDLGFPVVQFAYPRGPYINEKYGKKEDYRVVMYGARAAAETGADMIKTYWTGSKETFAKVVDAAAGVPVLLSGGAKTDNPVDFLKVVWDVIEAGGAGAVVGRNIFQRENPEPMIKALIRVIHRNEDPEEAAKAEGLI.

K191 functions as the Schiff-base intermediate with dihydroxyacetone-P in the catalytic mechanism.

It belongs to the DeoC/FbaB aldolase family. In terms of assembly, homooctamer.

It is found in the cytoplasm. It localises to the chromosome. The catalysed reaction is beta-D-fructose 1,6-bisphosphate = D-glyceraldehyde 3-phosphate + dihydroxyacetone phosphate. With respect to regulation, activated by citrate. This is Fructose-bisphosphate aldolase class 1 (fba) from Thermococcus kodakarensis (strain ATCC BAA-918 / JCM 12380 / KOD1) (Pyrococcus kodakaraensis (strain KOD1)).